Consider the following 341-residue polypeptide: Tyrosine recombinase XerC (341 aa).

One can recognise a Core-binding (CB) domain in the interval 14-105; it reads PDAAEALERW…GVRSFFRWAD (92 aa). Residues 126–309 enclose the Tyr recombinase domain; that stretch reads PLPRPLAADD…DAEHLLSVYE (184 aa). Catalysis depends on residues Arg-169, Lys-193, His-261, Arg-264, and His-287. Tyr-296 (O-(3'-phospho-DNA)-tyrosine intermediate) is an active-site residue.

Belongs to the 'phage' integrase family. XerC subfamily. As to quaternary structure, forms a cyclic heterotetrameric complex composed of two molecules of XerC and two molecules of XerD.

Its subcellular location is the cytoplasm. Its function is as follows. Site-specific tyrosine recombinase, which acts by catalyzing the cutting and rejoining of the recombining DNA molecules. The XerC-XerD complex is essential to convert dimers of the bacterial chromosome into monomers to permit their segregation at cell division. It also contributes to the segregational stability of plasmids. This is Tyrosine recombinase XerC from Rhodospirillum centenum (strain ATCC 51521 / SW).